The sequence spans 209 residues: uncharacterized protein (209 aa).

Residues 1–11 (MMRTNAGKETK) are compositionally biased toward basic and acidic residues. The interval 1 to 20 (MMRTNAGKETKGYNPAPADS) is disordered.

This is an uncharacterized protein from Caenorhabditis elegans.